The sequence spans 139 residues: Protein Turandot B (139 aa).

The N-terminal stretch at 1-21 (MNFNMSMICFALLLIVTLCSA) is a signal peptide.

This sequence belongs to the Turandot family.

It localises to the secreted. A humoral factor that may play a role in stress tolerance. This chain is Protein Turandot B, found in Drosophila yakuba (Fruit fly).